A 202-amino-acid polypeptide reads, in one-letter code: LexA repressor (202 aa).

The H-T-H motif DNA-binding region spans 28–48; sequence RAEIAQRLGFRSPNAAEEHLK. Residues Ser119 and Lys156 each act as for autocatalytic cleavage activity in the active site.

This sequence belongs to the peptidase S24 family. As to quaternary structure, homodimer.

It catalyses the reaction Hydrolysis of Ala-|-Gly bond in repressor LexA.. Functionally, represses a number of genes involved in the response to DNA damage (SOS response), including recA and lexA. Binds to the 16 bp palindromic sequence 5'-CTGTATATATATACAG-3'. In the presence of single-stranded DNA, RecA interacts with LexA causing an autocatalytic cleavage which disrupts the DNA-binding part of LexA, leading to derepression of the SOS regulon and eventually DNA repair. The chain is LexA repressor from Enterobacter sp. (strain 638).